The sequence spans 247 residues: Cell division protein ZapD (247 aa).

This sequence belongs to the ZapD family. Interacts with FtsZ.

The protein localises to the cytoplasm. Cell division factor that enhances FtsZ-ring assembly. Directly interacts with FtsZ and promotes bundling of FtsZ protofilaments, with a reduction in FtsZ GTPase activity. The protein is Cell division protein ZapD of Escherichia fergusonii (strain ATCC 35469 / DSM 13698 / CCUG 18766 / IAM 14443 / JCM 21226 / LMG 7866 / NBRC 102419 / NCTC 12128 / CDC 0568-73).